Consider the following 420-residue polypeptide: MAP kinase-interacting serine/threonine-protein kinase 1 (420 aa).

The disordered stretch occupies residues 1-25 (MGSSEPIPIAESDKRKKKKRKARAT). A Phosphoserine; by PAK2 modification is found at serine 27. The 285-residue stretch at 37 to 321 (KLTSELLGEG…AAQVLQHPWV (285 aa)) folds into the Protein kinase domain. Residues 43–51 (LGEGANAKV) and lysine 66 contribute to the ATP site. Aspartate 158 serves as the catalytic Proton acceptor. Residues serine 168 and serine 173 each carry the phosphoserine modification. A phosphothreonine mark is found at threonine 197, threonine 202, and threonine 332. A disordered region spans residues 386 to 420 (LSPPSKSRLARRRALAQAGRSGDAPPSPTPTTPAP). Positions 400 to 409 (LAQAGRSGDA) are enriched in low complexity. The segment covering 410 to 420 (PPSPTPTTPAP) has biased composition (pro residues).

Belongs to the protein kinase superfamily. CAMK Ser/Thr protein kinase family. Interacts with the C-terminal regions of EIF4G1 and EIF4G2. Also binds to dephosphorylated ERK1 and ERK2, and to the p38 kinases. Requires Mg(2+) as cofactor. In terms of processing, dual phosphorylation of Thr-197 and Thr-202 activates the kinase. Phosphorylation of Thr-332 activates the kinase. MAPK3/ERK1 is one of the kinases which activate MKNK1/MNK1. Phosphorylation by PAK2 leads to a reduced phosphorylation of EIF4G1.

It carries out the reaction L-seryl-[protein] + ATP = O-phospho-L-seryl-[protein] + ADP + H(+). It catalyses the reaction L-threonyl-[protein] + ATP = O-phospho-L-threonyl-[protein] + ADP + H(+). Phosphorylated and activated by the p38 kinases and kinases in the Erk pathway. Functionally, may play a role in the response to environmental stress and cytokines. Appears to regulate translation by phosphorylating EIF4E, thus increasing the affinity of this protein for the 7-methylguanosine-containing mRNA cap. The protein is MAP kinase-interacting serine/threonine-protein kinase 1 (MKNK1) of Bos taurus (Bovine).